Consider the following 115-residue polypeptide: Large ribosomal subunit protein bL19 (115 aa).

It belongs to the bacterial ribosomal protein bL19 family.

This protein is located at the 30S-50S ribosomal subunit interface and may play a role in the structure and function of the aminoacyl-tRNA binding site. In Desulfovibrio desulfuricans (strain ATCC 27774 / DSM 6949 / MB), this protein is Large ribosomal subunit protein bL19.